The sequence spans 382 residues: Na(+)/H(+) antiporter NhaA 1 (382 aa).

Helical transmembrane passes span 10 to 30 (EFSIPLISGVIVALVWANISP), 45 to 65 (FSFHFIVNDFFMVLFFGIAAA), 87 to 107 (LLATIGGVVGPVLVYVVLNAL), 116 to 136 (GWGIPTATDIALAWLVASLVF), 145 to 165 (FLLLLAIADDAIGLAIIALFY), 170 to 190 (LPAAPQWLVLVLSGMGAAALL), 211 to 231 (AGLFMAHLHPALALVFIVPFL), 252 to 272 (LASFEHEWKVMVDFGLFLFGL), 275 to 295 (AGVTFGSIGAATWLVLASLVI), 326 to 346 (LVGLIAGIGLTVALFVAGEAF), and 353 to 373 (GAAKMGALMSAGCAVLALAAG).

This sequence belongs to the NhaA Na(+)/H(+) (TC 2.A.33) antiporter family.

It is found in the cell inner membrane. The enzyme catalyses Na(+)(in) + 2 H(+)(out) = Na(+)(out) + 2 H(+)(in). Na(+)/H(+) antiporter that extrudes sodium in exchange for external protons. In Pelobacter propionicus (strain DSM 2379 / NBRC 103807 / OttBd1), this protein is Na(+)/H(+) antiporter NhaA 1.